The following is a 118-amino-acid chain: Peptidyl-tRNA hydrolase (118 aa).

Belongs to the PTH2 family.

The protein resides in the cytoplasm. It catalyses the reaction an N-acyl-L-alpha-aminoacyl-tRNA + H2O = an N-acyl-L-amino acid + a tRNA + H(+). Functionally, the natural substrate for this enzyme may be peptidyl-tRNAs which drop off the ribosome during protein synthesis. This chain is Peptidyl-tRNA hydrolase, found in Thermococcus sibiricus (strain DSM 12597 / MM 739).